We begin with the raw amino-acid sequence, 435 residues long: Rho GTPase-activating protein 4 (435 aa).

A disordered region spans residues 1 to 59 (MAKVLKSSQSCHFPSPSSSSSTSCGGGNDGSNRDPHSPFNISRREEEEEEEERSEKERE). Residues 7-23 (SSQSCHFPSPSSSSSTS) are compositionally biased toward low complexity. One can recognise a CRIB domain in the interval 93 to 106 (IGVPTDVRHVAHVT). The Rho-GAP domain occupies 138-319 (VSTESMQLSY…LIVKTLKDRK (182 aa)). Residues 321–343 (SRDKLVPASNPSPRDHNGDQSSS) are disordered.

Its function is as follows. Acts as a GTPase activator for the Rac-type GTPase by converting it to an inactive GDP-bound state. Acts as a negative feedback regulator in tolerance to oxygen deprivation which requires ARAC4/ROP2. The sequence is that of Rho GTPase-activating protein 4 (ROPGAP4) from Arabidopsis thaliana (Mouse-ear cress).